A 233-amino-acid chain; its full sequence is Large ribosomal subunit protein uL1 (233 aa).

It belongs to the universal ribosomal protein uL1 family. As to quaternary structure, part of the 50S ribosomal subunit.

Functionally, binds directly to 23S rRNA. The L1 stalk is quite mobile in the ribosome, and is involved in E site tRNA release. In terms of biological role, protein L1 is also a translational repressor protein, it controls the translation of the L11 operon by binding to its mRNA. The protein is Large ribosomal subunit protein uL1 of Geobacillus sp. (strain WCH70).